Here is a 380-residue protein sequence, read N- to C-terminus: Chorismate synthase (380 aa).

NADP(+) is bound at residue arginine 47. FMN contacts are provided by residues 124-126 (RSS), glycine 288, 303-307 (KPTST), and arginine 329.

The protein belongs to the chorismate synthase family. As to quaternary structure, homotetramer. FMNH2 is required as a cofactor.

It carries out the reaction 5-O-(1-carboxyvinyl)-3-phosphoshikimate = chorismate + phosphate. It participates in metabolic intermediate biosynthesis; chorismate biosynthesis; chorismate from D-erythrose 4-phosphate and phosphoenolpyruvate: step 7/7. Functionally, catalyzes the anti-1,4-elimination of the C-3 phosphate and the C-6 proR hydrogen from 5-enolpyruvylshikimate-3-phosphate (EPSP) to yield chorismate, which is the branch point compound that serves as the starting substrate for the three terminal pathways of aromatic amino acid biosynthesis. This reaction introduces a second double bond into the aromatic ring system. The chain is Chorismate synthase from Leptospira interrogans serogroup Icterohaemorrhagiae serovar copenhageni (strain Fiocruz L1-130).